The chain runs to 229 residues: Non-structural protein P8 (229 aa).

The next 2 membrane-spanning stretches (helical) occupy residues 119 to 139 (IIHM…VCTL) and 162 to 182 (SLNP…MVCA).

The protein belongs to the orbivirus NS3 family. Forms homooligomers via coiled-coil motif. Interacts with host OPTN; this interaction inhibits innate immune response.

The protein localises to the host cell membrane. The protein resides in the host Golgi apparatus. Plays a role in the inhibition of host innate immune response. Interacts with host OPTN and thus inhibits the recruitment of TBK1 to the host Golgi apparatus. In turn, downstream partner IRF3 cannot be activated and IFN-beta production is impaired. Its function is as follows. Facilitates viral particle release either by increasing plasma membrane permeability through a viroporin-like activity or by viral budding. The sequence is that of Non-structural protein P8 (Segment-10) from Bluetongue virus 1 (isolate Australia) (BTV 1).